A 426-amino-acid chain; its full sequence is Enolase (426 aa).

(2R)-2-phosphoglycerate is bound at residue glutamine 163. Glutamate 205 functions as the Proton donor in the catalytic mechanism. Positions 242, 285, and 312 each coordinate Mg(2+). Lysine 337, arginine 366, serine 367, and lysine 388 together coordinate (2R)-2-phosphoglycerate. Residue lysine 337 is the Proton acceptor of the active site.

Belongs to the enolase family. Requires Mg(2+) as cofactor.

The protein resides in the cytoplasm. It localises to the secreted. The protein localises to the cell surface. It catalyses the reaction (2R)-2-phosphoglycerate = phosphoenolpyruvate + H2O. It functions in the pathway carbohydrate degradation; glycolysis; pyruvate from D-glyceraldehyde 3-phosphate: step 4/5. In terms of biological role, catalyzes the reversible conversion of 2-phosphoglycerate (2-PG) into phosphoenolpyruvate (PEP). It is essential for the degradation of carbohydrates via glycolysis. The chain is Enolase from Gluconobacter oxydans (strain 621H) (Gluconobacter suboxydans).